The primary structure comprises 1035 residues: Ephrin type-A receptor 6 (1035 aa).

Residues 1 to 22 form the signal peptide; sequence MGGCEVREFLLQFGFFLPLLTA. The Extracellular segment spans residues 23 to 549; it reads WTGDCSHVSN…MAAEQGQILV (527 aa). The Eph LBD domain occupies 33–211; it reads QVVLLDTTTV…FYKKCPFTVR (179 aa). Fibronectin type-III domains are found at residues 330-440 and 441-536; these read PPSA…TDHD and APSL…TGDE. N-linked (GlcNAc...) asparagine glycans are attached at residues Asn-342, Asn-396, and Asn-409. Residues 550 to 570 form a helical membrane-spanning segment; the sequence is IATAAVGGFTLLVILTLFFLI. Residues 571-1035 are Cytoplasmic-facing; the sequence is TGRCQWYIKA…MHIQEKGFHV (465 aa). 2 positions are modified to phosphotyrosine; by autocatalysis: Tyr-605 and Tyr-611. In terms of domain architecture, Protein kinase spans 630 to 943; the sequence is IRIERVIGAG…RNPSALHTLV (314 aa). Residues 636–644 and Lys-662 each bind ATP; that span reads IGAGEFGEV. Catalysis depends on Asp-797, which acts as the Proton acceptor. Residues Tyr-830 and Tyr-977 each carry the phosphotyrosine; by autocatalysis modification. An SAM domain is found at 960-1024; sequence PLFVTVGDWL…VSSIQTLRLH (65 aa). A PDZ-binding motif is present at residues 1033–1035; the sequence is FHV.

It belongs to the protein kinase superfamily. Tyr protein kinase family. Ephrin receptor subfamily. In terms of assembly, heterotetramer upon binding of the ligand. The heterotetramer is composed of an ephrin dimer and a receptor dimer. Oligomerization is probably required to induce biological responses. Interacts (via SAM domain) with ANKS1A (via SAM domain).

The protein resides in the membrane. The enzyme catalyses L-tyrosyl-[protein] + ATP = O-phospho-L-tyrosyl-[protein] + ADP + H(+). Functionally, receptor tyrosine kinase which binds promiscuously GPI-anchored ephrin-A family ligands residing on adjacent cells, leading to contact-dependent bidirectional signaling into neighboring cells. The signaling pathway downstream of the receptor is referred to as forward signaling while the signaling pathway downstream of the ephrin ligand is referred to as reverse signaling. The protein is Ephrin type-A receptor 6 (Epha6) of Mus musculus (Mouse).